The chain runs to 241 residues: tRNA (guanine-N(7)-)-methyltransferase (241 aa).

Residues glutamate 71, glutamate 96, aspartate 123, and aspartate 146 each coordinate S-adenosyl-L-methionine. Residue aspartate 146 is part of the active site. Residues lysine 150, aspartate 182, and 219–222 (TKFE) contribute to the substrate site.

Belongs to the class I-like SAM-binding methyltransferase superfamily. TrmB family.

It catalyses the reaction guanosine(46) in tRNA + S-adenosyl-L-methionine = N(7)-methylguanosine(46) in tRNA + S-adenosyl-L-homocysteine. The protein operates within tRNA modification; N(7)-methylguanine-tRNA biosynthesis. Functionally, catalyzes the formation of N(7)-methylguanine at position 46 (m7G46) in tRNA. In Pseudoalteromonas translucida (strain TAC 125), this protein is tRNA (guanine-N(7)-)-methyltransferase.